We begin with the raw amino-acid sequence, 388 residues long: Succinate--CoA ligase [ADP-forming] subunit beta (388 aa).

The 236-residue stretch at 9-244 (KEILRKYGVT…LDEEDPAEIE (236 aa)) folds into the ATP-grasp domain. Residues Lys46, 53–55 (GRG), Glu99, Ala102, and Glu107 contribute to the ATP site. Mg(2+)-binding residues include Asn199 and Asp213. Substrate is bound by residues Asn264 and 321–323 (GIM).

Belongs to the succinate/malate CoA ligase beta subunit family. In terms of assembly, heterotetramer of two alpha and two beta subunits. Mg(2+) is required as a cofactor.

The catalysed reaction is succinate + ATP + CoA = succinyl-CoA + ADP + phosphate. It carries out the reaction GTP + succinate + CoA = succinyl-CoA + GDP + phosphate. It functions in the pathway carbohydrate metabolism; tricarboxylic acid cycle; succinate from succinyl-CoA (ligase route): step 1/1. Functionally, succinyl-CoA synthetase functions in the citric acid cycle (TCA), coupling the hydrolysis of succinyl-CoA to the synthesis of either ATP or GTP and thus represents the only step of substrate-level phosphorylation in the TCA. The beta subunit provides nucleotide specificity of the enzyme and binds the substrate succinate, while the binding sites for coenzyme A and phosphate are found in the alpha subunit. The chain is Succinate--CoA ligase [ADP-forming] subunit beta from Herminiimonas arsenicoxydans.